Reading from the N-terminus, the 71-residue chain is DNA-directed RNA polymerase subunit epsilon (71 aa).

It belongs to the RNA polymerase subunit epsilon family. In terms of assembly, RNAP is composed of a core of 2 alpha, a beta and a beta' subunit. The core is associated with a delta subunit, and at least one of epsilon or omega. When a sigma factor is associated with the core the holoenzyme is formed, which can initiate transcription.

It catalyses the reaction RNA(n) + a ribonucleoside 5'-triphosphate = RNA(n+1) + diphosphate. Its function is as follows. A non-essential component of RNA polymerase (RNAP). This Geobacillus thermodenitrificans (strain NG80-2) protein is DNA-directed RNA polymerase subunit epsilon.